Consider the following 314-residue polypeptide: Homoserine O-acetyltransferase (314 aa).

Cys-142 serves as the catalytic Acyl-thioester intermediate. Residues Lys-163 and Ser-192 each coordinate substrate. His-235 functions as the Proton acceptor in the catalytic mechanism. Glu-237 is a catalytic residue. Arg-249 lines the substrate pocket.

This sequence belongs to the MetA family.

The protein localises to the cytoplasm. The enzyme catalyses L-homoserine + acetyl-CoA = O-acetyl-L-homoserine + CoA. The protein operates within amino-acid biosynthesis; L-methionine biosynthesis via de novo pathway; O-acetyl-L-homoserine from L-homoserine: step 1/1. Functionally, transfers an acetyl group from acetyl-CoA to L-homoserine, forming acetyl-L-homoserine. The sequence is that of Homoserine O-acetyltransferase from Desulfovibrio desulfuricans (strain ATCC 27774 / DSM 6949 / MB).